The chain runs to 297 residues: Small ribosomal subunit protein uS9m (297 aa).

The tract at residues 278–297 (VERKKPGKRKARKMPTWVKR) is disordered.

It belongs to the universal ribosomal protein uS9 family.

The protein resides in the mitochondrion. The protein is Small ribosomal subunit protein uS9m (MRPS9) of Kluyveromyces lactis (strain ATCC 8585 / CBS 2359 / DSM 70799 / NBRC 1267 / NRRL Y-1140 / WM37) (Yeast).